A 138-amino-acid polypeptide reads, in one-letter code: Acidic phospholipase A2 5 (138 aa).

Residues 1–16 (MRTLWIVAVWLIGVEG) form the signal peptide. Disulfide bonds link Cys-42–Cys-131, Cys-44–Cys-60, Cys-59–Cys-111, Cys-65–Cys-138, Cys-66–Cys-104, Cys-73–Cys-97, and Cys-91–Cys-102. Residues Tyr-43, Gly-45, and Gly-47 each coordinate Ca(2+). The active site involves His-63. Asp-64 provides a ligand contact to Ca(2+). Asp-105 is an active-site residue.

Belongs to the phospholipase A2 family. Group II subfamily. D49 sub-subfamily. The cofactor is Ca(2+). As to expression, expressed by the venom gland.

The protein localises to the secreted. It catalyses the reaction a 1,2-diacyl-sn-glycero-3-phosphocholine + H2O = a 1-acyl-sn-glycero-3-phosphocholine + a fatty acid + H(+). Its function is as follows. PLA2 catalyzes the calcium-dependent hydrolysis of the 2-acyl groups in 3-sn-phosphoglycerides. This Echis ocellatus (Ocellated saw-scaled viper) protein is Acidic phospholipase A2 5.